The chain runs to 490 residues: Betaine aldehyde dehydrogenase (490 aa).

K(+) is bound by residues Ser26, Ile27, and Asp93. 150–152 (GAW) serves as a coordination point for NAD(+). Lys162 serves as the catalytic Charge relay system. NAD(+) is bound at residue 176 to 179 (KPSE). Position 180 (Val180) interacts with K(+). Residue 230–233 (GTDT) participates in NAD(+) binding. Leu246 lines the K(+) pocket. Glu252 serves as the catalytic Proton acceptor. The NAD(+) site is built by Gly254, Cys286, and Glu387. The active-site Nucleophile is Cys286. Cys286 carries the cysteine sulfenic acid (-SOH) modification. K(+)-binding residues include Lys457 and Gly460. The active-site Charge relay system is the Glu464.

This sequence belongs to the aldehyde dehydrogenase family. Dimer of dimers. It depends on K(+) as a cofactor.

The enzyme catalyses betaine aldehyde + NAD(+) + H2O = glycine betaine + NADH + 2 H(+). Its pathway is amine and polyamine biosynthesis; betaine biosynthesis via choline pathway; betaine from betaine aldehyde: step 1/1. Its function is as follows. Involved in the biosynthesis of the osmoprotectant glycine betaine. Catalyzes the irreversible oxidation of betaine aldehyde to the corresponding acid. The sequence is that of Betaine aldehyde dehydrogenase from Pseudomonas syringae pv. tomato (strain ATCC BAA-871 / DC3000).